Consider the following 125-residue polypeptide: Small ribosomal subunit protein uS12 (125 aa).

Aspartate 89 carries the post-translational modification 3-methylthioaspartic acid.

The protein belongs to the universal ribosomal protein uS12 family. Part of the 30S ribosomal subunit. Contacts proteins S8 and S17. May interact with IF1 in the 30S initiation complex.

With S4 and S5 plays an important role in translational accuracy. Its function is as follows. Interacts with and stabilizes bases of the 16S rRNA that are involved in tRNA selection in the A site and with the mRNA backbone. Located at the interface of the 30S and 50S subunits, it traverses the body of the 30S subunit contacting proteins on the other side and probably holding the rRNA structure together. The combined cluster of proteins S8, S12 and S17 appears to hold together the shoulder and platform of the 30S subunit. The chain is Small ribosomal subunit protein uS12 from Clostridium novyi (strain NT).